We begin with the raw amino-acid sequence, 169 residues long: Protein-export protein SecB (169 aa).

Belongs to the SecB family. In terms of assembly, homotetramer, a dimer of dimers. One homotetramer interacts with 1 SecA dimer.

The protein localises to the cytoplasm. Functionally, one of the proteins required for the normal export of preproteins out of the cell cytoplasm. It is a molecular chaperone that binds to a subset of precursor proteins, maintaining them in a translocation-competent state. It also specifically binds to its receptor SecA. This is Protein-export protein SecB from Alteromonas mediterranea (strain DSM 17117 / CIP 110805 / LMG 28347 / Deep ecotype).